A 490-amino-acid chain; its full sequence is Betaine aldehyde dehydrogenase (490 aa).

K(+) contacts are provided by Ser-26, Ile-27, and Asp-93. Residue 150 to 152 coordinates NAD(+); sequence GAW. Lys-162 serves as the catalytic Charge relay system. NAD(+) is bound by residues 176 to 179 and 230 to 233; these read KPSE and GVET. Residue Leu-246 participates in K(+) binding. Glu-252 (proton acceptor) is an active-site residue. NAD(+) contacts are provided by Gly-254, Cys-286, and Glu-387. Cys-286 acts as the Nucleophile in catalysis. Cys-286 bears the Cysteine sulfenic acid (-SOH) mark. 2 residues coordinate K(+): Lys-457 and Gly-460. The active-site Charge relay system is Glu-464.

Belongs to the aldehyde dehydrogenase family. In terms of assembly, dimer of dimers. K(+) is required as a cofactor.

It catalyses the reaction betaine aldehyde + NAD(+) + H2O = glycine betaine + NADH + 2 H(+). Its pathway is amine and polyamine biosynthesis; betaine biosynthesis via choline pathway; betaine from betaine aldehyde: step 1/1. Functionally, involved in the biosynthesis of the osmoprotectant glycine betaine. Catalyzes the irreversible oxidation of betaine aldehyde to the corresponding acid. In Acinetobacter baumannii (strain ACICU), this protein is Betaine aldehyde dehydrogenase.